The following is a 310-amino-acid chain: Mycothiol acetyltransferase (310 aa).

N-acetyltransferase domains lie at 5–155 (TTVE…HPAR) and 160–309 (PPFR…LPAA). 80–82 (LLV) serves as a coordination point for acetyl-CoA. Residues aspartate 187, lysine 226, and glutamate 238 each contribute to the 1D-myo-inositol 2-(L-cysteinylamino)-2-deoxy-alpha-D-glucopyranoside site. Residue 242–244 (IAT) coordinates acetyl-CoA. 1D-myo-inositol 2-(L-cysteinylamino)-2-deoxy-alpha-D-glucopyranoside is bound at residue tyrosine 276. An acetyl-CoA-binding site is contributed by 281 to 286 (NERALR).

It belongs to the acetyltransferase family. MshD subfamily. In terms of assembly, monomer.

It carries out the reaction 1D-myo-inositol 2-(L-cysteinylamino)-2-deoxy-alpha-D-glucopyranoside + acetyl-CoA = mycothiol + CoA + H(+). Its function is as follows. Catalyzes the transfer of acetyl from acetyl-CoA to desacetylmycothiol (Cys-GlcN-Ins) to form mycothiol. This chain is Mycothiol acetyltransferase, found in Acidimicrobium ferrooxidans (strain DSM 10331 / JCM 15462 / NBRC 103882 / ICP).